Consider the following 417-residue polypeptide: Phosphoglycerate kinase 2 (417 aa).

Ser2 is modified (N-acetylserine). Residues Ser2 and Ser4 each carry the phosphoserine modification. Position 11 is an N6-acetyllysine (Lys11). (2R)-3-phosphoglycerate is bound by residues Val23, Asp24, Phe25, Asn26, Gln38, and Arg39. Lys48 bears the N6-acetyllysine mark. 4 residues coordinate (2R)-3-phosphoglycerate: Ser62, His63, Gly65, and Arg66. 3 positions are modified to N6-acetyllysine: Lys75, Lys86, and Lys97. (2R)-3-phosphoglycerate is bound by residues Leu122 and Arg123. Residues Lys131 and Lys146 each carry the N6-acetyllysine modification. Residues His170 and Arg171 each coordinate (2R)-3-phosphoglycerate. The residue at position 196 (Tyr196) is a Phosphotyrosine. Lys199 bears the N6-acetyllysine mark. Gly214 is a binding site for ADP. Gly214 contacts CDP. AMP contacts are provided by Ala215 and Lys216. Ala215 serves as a coordination point for ATP. Residue Ala215 coordinates Mg(2+). Residues Ala218 and Asp219 each coordinate Mg(2+). Asp219 lines the CDP pocket. An AMP-binding site is contributed by Lys220. Lys220 serves as a coordination point for ATP. An ADP-binding site is contributed by Gly238. Residue Gly238 coordinates CDP. Residue Gly239 participates in AMP binding. Gly239 serves as a coordination point for ATP. 2 positions are modified to N6-acetyllysine: Lys267 and Lys291. Gly313 is an AMP binding site. Gly313 provides a ligand contact to ATP. Positions 338, 340, and 343 each coordinate CDP. Position 343 (Phe343) interacts with ADP. Residue Glu344 participates in AMP binding. The ATP site is built by Glu344, Asp375, and Thr376. Residue Asp375 coordinates Mg(2+).

The protein belongs to the phosphoglycerate kinase family. In terms of assembly, monomer. The cofactor is Mg(2+).

It localises to the cytoplasm. It carries out the reaction (2R)-3-phosphoglycerate + ATP = (2R)-3-phospho-glyceroyl phosphate + ADP. It participates in carbohydrate degradation; glycolysis; pyruvate from D-glyceraldehyde 3-phosphate: step 2/5. Its function is as follows. Essential for sperm motility and male fertility but is not required for the completion of spermatogenesis. The protein is Phosphoglycerate kinase 2 (PGK2) of Equus caballus (Horse).